A 49-amino-acid polypeptide reads, in one-letter code: Sperm protamine P1 (49 aa).

The protein belongs to the protamine P1 family. In terms of tissue distribution, testis.

Its subcellular location is the nucleus. The protein resides in the chromosome. Functionally, protamines substitute for histones in the chromatin of sperm during the haploid phase of spermatogenesis. They compact sperm DNA into a highly condensed, stable and inactive complex. In Pteropus hypomelanus (Island flying fox), this protein is Sperm protamine P1 (PRM1).